The chain runs to 378 residues: Succinyl-diaminopimelate desuccinylase (378 aa).

Zn(2+) is bound at residue His67. The active site involves Asp69. Zn(2+) is bound at residue Asp100. Glu134 functions as the Proton acceptor in the catalytic mechanism. The Zn(2+) site is built by Glu135, Glu163, and His349.

It belongs to the peptidase M20A family. DapE subfamily. Homodimer. The cofactor is Zn(2+). Co(2+) is required as a cofactor.

It catalyses the reaction N-succinyl-(2S,6S)-2,6-diaminopimelate + H2O = (2S,6S)-2,6-diaminopimelate + succinate. Its pathway is amino-acid biosynthesis; L-lysine biosynthesis via DAP pathway; LL-2,6-diaminopimelate from (S)-tetrahydrodipicolinate (succinylase route): step 3/3. Catalyzes the hydrolysis of N-succinyl-L,L-diaminopimelic acid (SDAP), forming succinate and LL-2,6-diaminopimelate (DAP), an intermediate involved in the bacterial biosynthesis of lysine and meso-diaminopimelic acid, an essential component of bacterial cell walls. The protein is Succinyl-diaminopimelate desuccinylase of Nitrosospira multiformis (strain ATCC 25196 / NCIMB 11849 / C 71).